Consider the following 239-residue polypeptide: Ribose-5-phosphate isomerase A (239 aa).

Residues 40–43, 96–99, and 110–113 each bind substrate; these read SGST, DGAD, and KGGG. The active-site Proton acceptor is the E119. Position 137 (K137) interacts with substrate.

The protein belongs to the ribose 5-phosphate isomerase family. In terms of assembly, homodimer.

It catalyses the reaction aldehydo-D-ribose 5-phosphate = D-ribulose 5-phosphate. It functions in the pathway carbohydrate degradation; pentose phosphate pathway; D-ribose 5-phosphate from D-ribulose 5-phosphate (non-oxidative stage): step 1/1. Functionally, catalyzes the reversible conversion of ribose-5-phosphate to ribulose 5-phosphate. The polypeptide is Ribose-5-phosphate isomerase A (Methanococcus maripaludis (strain C6 / ATCC BAA-1332)).